A 367-amino-acid chain; its full sequence is Homeobox protein Nkx-6.1 (367 aa).

The interval Tyr36–Ala133 is disordered. Low complexity-rich tracts occupy residues Pro48–Ser59, Gly78–Ser91, and Ala110–Ala133. The segment at Leu102–Arg268 is repressor domain. Arg189 carries the post-translational modification Asymmetric dimethylarginine. The segment at residues Arg236–His295 is a DNA-binding region (homeobox). The tract at residues Lys294–Ser367 is disordered. Over residues Lys304–Ser317 the composition is skewed to basic and acidic residues. Positions Gln306–Ser367 are involved in DNA-binding.

Pancreatic beta cells.

It localises to the nucleus. In terms of biological role, transcription factor which binds to specific A/T-rich DNA sequences in the promoter regions of a number of genes. Involved in the development of insulin-producing beta cells in the islets of Langerhans at the secondary transition. Together with NKX2-2 and IRX3 acts to restrict the generation of motor neurons to the appropriate region of the neural tube. Belongs to the class II proteins of neuronal progenitor factors, which are induced by SHH signals. This is Homeobox protein Nkx-6.1 (NKX6-1) from Homo sapiens (Human).